Consider the following 448-residue polypeptide: Probable glycine dehydrogenase (decarboxylating) subunit 1 (448 aa).

It belongs to the GcvP family. N-terminal subunit subfamily. In terms of assembly, the glycine cleavage system is composed of four proteins: P, T, L and H. In this organism, the P 'protein' is a heterodimer of two subunits.

The catalysed reaction is N(6)-[(R)-lipoyl]-L-lysyl-[glycine-cleavage complex H protein] + glycine + H(+) = N(6)-[(R)-S(8)-aminomethyldihydrolipoyl]-L-lysyl-[glycine-cleavage complex H protein] + CO2. Functionally, the glycine cleavage system catalyzes the degradation of glycine. The P protein binds the alpha-amino group of glycine through its pyridoxal phosphate cofactor; CO(2) is released and the remaining methylamine moiety is then transferred to the lipoamide cofactor of the H protein. This chain is Probable glycine dehydrogenase (decarboxylating) subunit 1, found in Staphylococcus epidermidis (strain ATCC 35984 / DSM 28319 / BCRC 17069 / CCUG 31568 / BM 3577 / RP62A).